Here is a 49-residue protein sequence, read N- to C-terminus: Large ribosomal subunit protein bL33 (49 aa).

Belongs to the bacterial ribosomal protein bL33 family.

The chain is Large ribosomal subunit protein bL33 from Heliobacterium modesticaldum (strain ATCC 51547 / Ice1).